A 497-amino-acid polypeptide reads, in one-letter code: mRNA cleavage and polyadenylation factor CLP1 (497 aa).

Positions 1 to 20 (MSIPGLGQIAPQQPTTSTTR) are disordered. ATP is bound by residues E29 and 168–173 (DSGKTT).

Belongs to the Clp1 family. Clp1 subfamily. In terms of assembly, component of a pre-mRNA cleavage factor complex. Interacts directly with PCF11.

Its subcellular location is the nucleus. Functionally, required for endonucleolytic cleavage during polyadenylation-dependent pre-mRNA 3'-end formation. The protein is mRNA cleavage and polyadenylation factor CLP1 of Chaetomium globosum (strain ATCC 6205 / CBS 148.51 / DSM 1962 / NBRC 6347 / NRRL 1970) (Soil fungus).